The following is a 293-amino-acid chain: 4-hydroxy-tetrahydrodipicolinate synthase (293 aa).

A pyruvate-binding site is contributed by Thr-44. Catalysis depends on Tyr-132, which acts as the Proton donor/acceptor. Lys-161 functions as the Schiff-base intermediate with substrate in the catalytic mechanism. Ile-203 is a pyruvate binding site.

Belongs to the DapA family. Homotetramer; dimer of dimers.

It localises to the cytoplasm. The enzyme catalyses L-aspartate 4-semialdehyde + pyruvate = (2S,4S)-4-hydroxy-2,3,4,5-tetrahydrodipicolinate + H2O + H(+). Its pathway is amino-acid biosynthesis; L-lysine biosynthesis via DAP pathway; (S)-tetrahydrodipicolinate from L-aspartate: step 3/4. In terms of biological role, catalyzes the condensation of (S)-aspartate-beta-semialdehyde [(S)-ASA] and pyruvate to 4-hydroxy-tetrahydrodipicolinate (HTPA). This Persephonella marina (strain DSM 14350 / EX-H1) protein is 4-hydroxy-tetrahydrodipicolinate synthase.